Reading from the N-terminus, the 179-residue chain is Dual-action ribosomal maturation protein DarP (179 aa).

It belongs to the DarP family.

It localises to the cytoplasm. Functionally, member of a network of 50S ribosomal subunit biogenesis factors which assembles along the 30S-50S interface, preventing incorrect 23S rRNA structures from forming. Promotes peptidyl transferase center (PTC) maturation. The protein is Dual-action ribosomal maturation protein DarP of Erwinia tasmaniensis (strain DSM 17950 / CFBP 7177 / CIP 109463 / NCPPB 4357 / Et1/99).